The chain runs to 629 residues: Ribosomal protein S6 kinase 2 beta (629 aa).

A Protein kinase 1 domain is found at 62–321 (FVLLKVLGQG…AEELKRHPFF (260 aa)). ATP contacts are provided by residues 68 to 76 (LGQGSFGKV) and Lys94. Asp187 serves as the catalytic Proton acceptor. At Ser221 the chain carries Phosphoserine. Positions 322-391 (STIDWNKLYR…VAPVLVEEDA (70 aa)) constitute an AGC-kinase C-terminal domain. Thr359 bears the Phosphothreonine mark. Phosphoserine is present on Ser363. A Phosphoserine; by autocatalysis modification is found at Ser380. Residues 416–629 (YTVRETIGVG…PEEILARIGS (214 aa)) enclose the Protein kinase 2 domain. ATP is bound by residues 422 to 430 (IGVGSYSVC) and Lys445. Asp533 serves as the catalytic Proton acceptor. Thr571 carries the post-translational modification Phosphothreonine.

It belongs to the protein kinase superfamily. AGC Ser/Thr protein kinase family. S6 kinase subfamily. It depends on Mg(2+) as a cofactor. In terms of processing, autophosphorylated on Ser-380, as part of the activation process.

It catalyses the reaction L-seryl-[protein] + ATP = O-phospho-L-seryl-[protein] + ADP + H(+). The enzyme catalyses L-threonyl-[protein] + ATP = O-phospho-L-threonyl-[protein] + ADP + H(+). With respect to regulation, activated by multiple phosphorylations on threonine and serine residues. Its function is as follows. Serine/threonine kinase that may play a role in mediating the growth-factor and stress induced activation of transcription. This Xenopus laevis (African clawed frog) protein is Ribosomal protein S6 kinase 2 beta.